The sequence spans 44 residues: F420-non-reducing hydrogenase vhu subunit U (44 aa).

Positions 20 and 23 each coordinate Ni(2+). A non-standard amino acid (selenocysteine) is located at residue U20. Residues 27 to 44 constitute a propeptide, removed in mature form; sequence MIVEDAEGNVVFEIVNDE.

This sequence belongs to the [NiFe]/[NiFeSe] hydrogenase large subunit family. The F420-non-reducing hydrogenase vhu is composed of four subunits; VhuA, VhuD, VhuG and VhuU. Requires Ni(2+) as cofactor.

The chain is F420-non-reducing hydrogenase vhu subunit U (vhuU) from Methanococcus voltae.